Consider the following 111-residue polypeptide: MASCCIFCAQFVLNRNLLEANKYKLSEITFKVYISIRRLLIVVITLYRRIVECCASLCSLIFSKYYLHYKTFRILTIIQSWSDKVSVLPNRLYCLPFCNAFIEFVKKLTET.

It localises to the cytoplasm. Its subcellular location is the nucleus. This is an uncharacterized protein from Schizosaccharomyces pombe (strain 972 / ATCC 24843) (Fission yeast).